We begin with the raw amino-acid sequence, 197 residues long: dTTP/UTP pyrophosphatase (197 aa).

Residue Asp70 is the Proton acceptor of the active site.

Belongs to the Maf family. YhdE subfamily. A divalent metal cation is required as a cofactor.

The protein resides in the cytoplasm. The enzyme catalyses dTTP + H2O = dTMP + diphosphate + H(+). It carries out the reaction UTP + H2O = UMP + diphosphate + H(+). In terms of biological role, nucleoside triphosphate pyrophosphatase that hydrolyzes dTTP and UTP. May have a dual role in cell division arrest and in preventing the incorporation of modified nucleotides into cellular nucleic acids. This Shigella sonnei (strain Ss046) protein is dTTP/UTP pyrophosphatase (yceF2).